We begin with the raw amino-acid sequence, 851 residues long: DNA mismatch repair protein MutS (851 aa).

602–609 is an ATP binding site; sequence GPNMSGKS.

The protein belongs to the DNA mismatch repair MutS family.

In terms of biological role, this protein is involved in the repair of mismatches in DNA. It is possible that it carries out the mismatch recognition step. This protein has a weak ATPase activity. The sequence is that of DNA mismatch repair protein MutS from Streptococcus pyogenes serotype M4 (strain MGAS10750).